A 373-amino-acid chain; its full sequence is Dual-specificity RNA methyltransferase RlmN (373 aa).

Residue E94 is the Proton acceptor of the active site. Residues 100-339 (EDDRATLCVS…VIVRKTRGDD (240 aa)) enclose the Radical SAM core domain. A disulfide bond links C107 and C344. The [4Fe-4S] cluster site is built by C114, C118, and C121. S-adenosyl-L-methionine-binding positions include 168–169 (GE), S200, 222–224 (SIH), and N301. C344 (S-methylcysteine intermediate) is an active-site residue.

The protein belongs to the radical SAM superfamily. RlmN family. Requires [4Fe-4S] cluster as cofactor.

Its subcellular location is the cytoplasm. It catalyses the reaction adenosine(2503) in 23S rRNA + 2 reduced [2Fe-2S]-[ferredoxin] + 2 S-adenosyl-L-methionine = 2-methyladenosine(2503) in 23S rRNA + 5'-deoxyadenosine + L-methionine + 2 oxidized [2Fe-2S]-[ferredoxin] + S-adenosyl-L-homocysteine. The enzyme catalyses adenosine(37) in tRNA + 2 reduced [2Fe-2S]-[ferredoxin] + 2 S-adenosyl-L-methionine = 2-methyladenosine(37) in tRNA + 5'-deoxyadenosine + L-methionine + 2 oxidized [2Fe-2S]-[ferredoxin] + S-adenosyl-L-homocysteine. In terms of biological role, specifically methylates position 2 of adenine 2503 in 23S rRNA and position 2 of adenine 37 in tRNAs. m2A2503 modification seems to play a crucial role in the proofreading step occurring at the peptidyl transferase center and thus would serve to optimize ribosomal fidelity. This is Dual-specificity RNA methyltransferase RlmN from Shewanella sp. (strain MR-7).